Consider the following 613-residue polypeptide: DNA polymerase II small subunit (613 aa).

The protein belongs to the DNA polymerase delta/II small subunit family. In terms of assembly, heterodimer of a large subunit and a small subunit.

It carries out the reaction DNA(n) + a 2'-deoxyribonucleoside 5'-triphosphate = DNA(n+1) + diphosphate. The enzyme catalyses Exonucleolytic cleavage in the 3'- to 5'-direction to yield nucleoside 5'-phosphates.. In terms of biological role, possesses two activities: a DNA synthesis (polymerase) and an exonucleolytic activity that degrades single-stranded DNA in the 3' to 5' direction. Has a template-primer preference which is characteristic of a replicative DNA polymerase. The protein is DNA polymerase II small subunit (polB) of Pyrococcus furiosus (strain ATCC 43587 / DSM 3638 / JCM 8422 / Vc1).